We begin with the raw amino-acid sequence, 697 residues long: uncharacterized protein (697 aa).

Transmembrane regions (helical) follow at residues 65–85, 106–126, 131–151, 163–183, 194–214, 227–247, 286–306, 316–336, 361–381, 394–414, 419–439, 450–470, 487–507, and 558–578; these read PVRN…VGIY, CTFR…LHNF, YRQS…EKAI, DAAL…DINE, LSSY…VPLG, TSAT…TASI, STNA…ANKD, PVTD…VLLE, SDEI…PEGV, MFEL…MAWE, ERML…EPYH, SVKR…YLAI, QGSQ…YKVW, and TSAG…HHRQ. The tract at residues 246-321 is disordered; it reads SINVRTSATT…NRFHPVTDIN (76 aa). Residues 251–298 are compositionally biased toward low complexity; the sequence is TSATTTESTNSNTNATTTESTNSSTNATTTASTNSSTNATTTESTNAS. Residues 299–321 are compositionally biased toward basic and acidic residues; the sequence is AKEDANKDGNAEDNRFHPVTDIN.

It localises to the membrane. This is an uncharacterized protein from Saccharomyces cerevisiae (strain ATCC 204508 / S288c) (Baker's yeast).